A 201-amino-acid polypeptide reads, in one-letter code: 3-isopropylmalate dehydratase small subunit (201 aa).

The protein belongs to the LeuD family. LeuD type 1 subfamily. In terms of assembly, heterodimer of LeuC and LeuD.

The catalysed reaction is (2R,3S)-3-isopropylmalate = (2S)-2-isopropylmalate. The protein operates within amino-acid biosynthesis; L-leucine biosynthesis; L-leucine from 3-methyl-2-oxobutanoate: step 2/4. In terms of biological role, catalyzes the isomerization between 2-isopropylmalate and 3-isopropylmalate, via the formation of 2-isopropylmaleate. The sequence is that of 3-isopropylmalate dehydratase small subunit from Sinorhizobium medicae (strain WSM419) (Ensifer medicae).